The primary structure comprises 177 residues: Ribosome maturation factor RimP (177 aa).

Belongs to the RimP family.

It localises to the cytoplasm. In terms of biological role, required for maturation of 30S ribosomal subunits. The polypeptide is Ribosome maturation factor RimP (Methylibium petroleiphilum (strain ATCC BAA-1232 / LMG 22953 / PM1)).